The primary structure comprises 134 residues: Terepressin/terephysin (134 aa).

The N-terminal stretch at 1 to 33 (MKCSVLPRSRLSWTMCVLLLPLLMLMLEGGVQG) is a signal peptide. A disulfide bond links cysteine 34 and cysteine 39. The propeptide occupies 44-50 (KRAVDSV). Disulfide bonds link cysteine 56/cysteine 100, cysteine 59/cysteine 73, cysteine 67/cysteine 90, cysteine 74/cysteine 80, cysteine 107/cysteine 121, cysteine 115/cysteine 133, and cysteine 122/cysteine 127.

It belongs to the vasopressin/oxytocin family. Contains 7 disulfide bonds. In terms of tissue distribution, expressed by the venom duct.

The protein localises to the secreted. The sequence is that of Terepressin/terephysin from Terebra subulata (Chocolate spotted auger).